A 169-amino-acid chain; its full sequence is Macro domain-containing protein SCO6450 (169 aa).

The region spanning 1–169 (MTGITLVQGD…AYEAFAARLG (169 aa)) is the Macro domain.

It belongs to the MacroD-type family.

The sequence is that of Macro domain-containing protein SCO6450 from Streptomyces coelicolor (strain ATCC BAA-471 / A3(2) / M145).